The following is a 382-amino-acid chain: Chaperone protein DnaJ (382 aa).

Residues 5 to 70 form the J domain; it reads DYYEVLGLQK…QKRAAYDQYG (66 aa). The CR-type zinc-finger motif lies at 134 to 212; the sequence is GTTKDIQINT…CHGEGRVHKK (79 aa). Zn(2+)-binding residues include Cys147, Cys150, Cys164, Cys167, Cys186, Cys189, Cys200, and Cys203. CXXCXGXG motif repeat units lie at residues 147–154, 164–171, 186–193, and 200–207; these read CDSCGGSG, CPHCHGSG, CPTCHGSG, and CRNCHGEG.

Belongs to the DnaJ family. Homodimer. Zn(2+) serves as cofactor.

Its subcellular location is the cytoplasm. In terms of biological role, participates actively in the response to hyperosmotic and heat shock by preventing the aggregation of stress-denatured proteins and by disaggregating proteins, also in an autonomous, DnaK-independent fashion. Unfolded proteins bind initially to DnaJ; upon interaction with the DnaJ-bound protein, DnaK hydrolyzes its bound ATP, resulting in the formation of a stable complex. GrpE releases ADP from DnaK; ATP binding to DnaK triggers the release of the substrate protein, thus completing the reaction cycle. Several rounds of ATP-dependent interactions between DnaJ, DnaK and GrpE are required for fully efficient folding. Also involved, together with DnaK and GrpE, in the DNA replication of plasmids through activation of initiation proteins. The protein is Chaperone protein DnaJ of Haemophilus influenzae (strain ATCC 51907 / DSM 11121 / KW20 / Rd).